A 178-amino-acid chain; its full sequence is Large ribosomal subunit protein uL6 (178 aa).

This sequence belongs to the universal ribosomal protein uL6 family. As to quaternary structure, part of the 50S ribosomal subunit.

This protein binds to the 23S rRNA, and is important in its secondary structure. It is located near the subunit interface in the base of the L7/L12 stalk, and near the tRNA binding site of the peptidyltransferase center. This chain is Large ribosomal subunit protein uL6, found in Francisella philomiragia subsp. philomiragia (strain ATCC 25017 / CCUG 19701 / FSC 153 / O#319-036).